The following is a 208-amino-acid chain: Outer-membrane lipoprotein LolB (208 aa).

An N-terminal signal peptide occupies residues methionine 1–alanine 21. Cysteine 22 carries the N-palmitoyl cysteine lipid modification. Cysteine 22 is lipidated: S-diacylglycerol cysteine.

Belongs to the LolB family. As to quaternary structure, monomer.

The protein resides in the cell outer membrane. Plays a critical role in the incorporation of lipoproteins in the outer membrane after they are released by the LolA protein. The polypeptide is Outer-membrane lipoprotein LolB (Erwinia tasmaniensis (strain DSM 17950 / CFBP 7177 / CIP 109463 / NCPPB 4357 / Et1/99)).